We begin with the raw amino-acid sequence, 248 residues long: Probable transcriptional regulatory protein AZC_0510 (248 aa).

Belongs to the TACO1 family.

Its subcellular location is the cytoplasm. In Azorhizobium caulinodans (strain ATCC 43989 / DSM 5975 / JCM 20966 / LMG 6465 / NBRC 14845 / NCIMB 13405 / ORS 571), this protein is Probable transcriptional regulatory protein AZC_0510.